Here is a 452-residue protein sequence, read N- to C-terminus: Tubulin beta-2 chain (452 aa).

GTP-binding residues include Gln-11, Glu-74, Ser-143, Val-147, Thr-148, Gly-149, Asn-209, and Asn-231. Residue Glu-74 coordinates Mg(2+). Residues 431 to 452 are disordered; the sequence is QEATADDEAEFEEEGEVEGEYD. A compositionally biased stretch (acidic residues) spans 434-452; that stretch reads TADDEAEFEEEGEVEGEYD.

This sequence belongs to the tubulin family. As to quaternary structure, dimer of alpha and beta chains. A typical microtubule is a hollow water-filled tube with an outer diameter of 25 nm and an inner diameter of 15 nM. Alpha-beta heterodimers associate head-to-tail to form protofilaments running lengthwise along the microtubule wall with the beta-tubulin subunit facing the microtubule plus end conferring a structural polarity. Microtubules usually have 13 protofilaments but different protofilament numbers can be found in some organisms and specialized cells. Requires Mg(2+) as cofactor.

It localises to the cytoplasm. The protein localises to the cytoskeleton. Its function is as follows. Tubulin is the major constituent of microtubules, a cylinder consisting of laterally associated linear protofilaments composed of alpha- and beta-tubulin heterodimers. Microtubules grow by the addition of GTP-tubulin dimers to the microtubule end, where a stabilizing cap forms. Below the cap, tubulin dimers are in GDP-bound state, owing to GTPase activity of alpha-tubulin. This chain is Tubulin beta-2 chain, found in Homarus americanus (American lobster).